The primary structure comprises 608 residues: Glutamyl-tRNA(Gln) amidotransferase subunit E (608 aa).

Residues 402 to 422 (EETRGANPDGTTRFLRPRPGA) form a disordered region.

This sequence belongs to the GatB/GatE family. GatE subfamily. In terms of assembly, heterodimer of GatD and GatE.

The enzyme catalyses L-glutamyl-tRNA(Gln) + L-glutamine + ATP + H2O = L-glutaminyl-tRNA(Gln) + L-glutamate + ADP + phosphate + H(+). Functionally, allows the formation of correctly charged Gln-tRNA(Gln) through the transamidation of misacylated Glu-tRNA(Gln) in organisms which lack glutaminyl-tRNA synthetase. The reaction takes place in the presence of glutamine and ATP through an activated gamma-phospho-Glu-tRNA(Gln). The GatDE system is specific for glutamate and does not act on aspartate. In Pyrobaculum calidifontis (strain DSM 21063 / JCM 11548 / VA1), this protein is Glutamyl-tRNA(Gln) amidotransferase subunit E.